We begin with the raw amino-acid sequence, 303 residues long: Ribosomal RNA small subunit methyltransferase H (303 aa).

Residues 36–38, aspartate 55, phenylalanine 81, aspartate 101, and glutamine 108 each bind S-adenosyl-L-methionine; that span reads CGH.

This sequence belongs to the methyltransferase superfamily. RsmH family.

It is found in the cytoplasm. The catalysed reaction is cytidine(1402) in 16S rRNA + S-adenosyl-L-methionine = N(4)-methylcytidine(1402) in 16S rRNA + S-adenosyl-L-homocysteine + H(+). In terms of biological role, specifically methylates the N4 position of cytidine in position 1402 (C1402) of 16S rRNA. This chain is Ribosomal RNA small subunit methyltransferase H, found in Aster yellows witches'-broom phytoplasma (strain AYWB).